The following is a 450-amino-acid chain: Exodeoxyribonuclease 7 large subunit (450 aa).

Belongs to the XseA family. As to quaternary structure, heterooligomer composed of large and small subunits.

It localises to the cytoplasm. It carries out the reaction Exonucleolytic cleavage in either 5'- to 3'- or 3'- to 5'-direction to yield nucleoside 5'-phosphates.. In terms of biological role, bidirectionally degrades single-stranded DNA into large acid-insoluble oligonucleotides, which are then degraded further into small acid-soluble oligonucleotides. This Rickettsia felis (strain ATCC VR-1525 / URRWXCal2) (Rickettsia azadi) protein is Exodeoxyribonuclease 7 large subunit.